The chain runs to 427 residues: Enolase (427 aa).

Residue Q163 participates in (2R)-2-phosphoglycerate binding. The active-site Proton donor is the E205. Residues D242, E285, and D312 each coordinate Mg(2+). Residues K337, R366, S367, and K388 each coordinate (2R)-2-phosphoglycerate. The active-site Proton acceptor is K337.

The protein belongs to the enolase family. Mg(2+) is required as a cofactor.

The protein localises to the cytoplasm. It localises to the secreted. The protein resides in the cell surface. The catalysed reaction is (2R)-2-phosphoglycerate = phosphoenolpyruvate + H2O. The protein operates within carbohydrate degradation; glycolysis; pyruvate from D-glyceraldehyde 3-phosphate: step 4/5. Its function is as follows. Catalyzes the reversible conversion of 2-phosphoglycerate (2-PG) into phosphoenolpyruvate (PEP). It is essential for the degradation of carbohydrates via glycolysis. The chain is Enolase from Leptothrix cholodnii (strain ATCC 51168 / LMG 8142 / SP-6) (Leptothrix discophora (strain SP-6)).